A 113-amino-acid polypeptide reads, in one-letter code: Dolichyl-diphosphooligosaccharide--protein glycosyltransferase subunit DAD1 (113 aa).

Residue S2 is modified to N-acetylserine. The Cytoplasmic portion of the chain corresponds to 2–30 (SASVLSVISRFLEEYLSATPQRLKLLDAY). Residues 31–51 (LLYILLTGALQFGYCLLVGTF) form a helical membrane-spanning segment. P52 is a topological domain (lumenal). Residues 53–73 (FNSFLSGFISCVGSFILAVCL) traverse the membrane as a helical segment. Over 74–92 (RIQINPQNKADFQGISPER) the chain is Cytoplasmic. Residues 93-113 (AFADFLFASTILHLVVMNFVG) traverse the membrane as a helical segment.

It belongs to the DAD/OST2 family. As to quaternary structure, component of the oligosaccharyltransferase (OST) complex. OST exists in two different complex forms which contain common core subunits RPN1, RPN2, OST48, OST4, DAD1 and TMEM258, either STT3A or STT3B as catalytic subunits, and form-specific accessory subunits. STT3A complex assembly occurs through the formation of 3 subcomplexes. Subcomplex 1 contains RPN1 and TMEM258, subcomplex 2 contains the STT3A-specific subunits STT3A, DC2/OSTC, and KCP2 as well as the core subunit OST4, and subcomplex 3 contains RPN2, DAD1, and OST48. The STT3A complex can form stable complexes with the Sec61 complex or with both the Sec61 and TRAP complexes.

It localises to the endoplasmic reticulum membrane. Its pathway is protein modification; protein glycosylation. In terms of biological role, subunit of the oligosaccharyl transferase (OST) complex that catalyzes the initial transfer of a defined glycan (Glc(3)Man(9)GlcNAc(2) in eukaryotes) from the lipid carrier dolichol-pyrophosphate to an asparagine residue within an Asn-X-Ser/Thr consensus motif in nascent polypeptide chains, the first step in protein N-glycosylation. N-glycosylation occurs cotranslationally and the complex associates with the Sec61 complex at the channel-forming translocon complex that mediates protein translocation across the endoplasmic reticulum (ER). All subunits are required for a maximal enzyme activity. This Bos taurus (Bovine) protein is Dolichyl-diphosphooligosaccharide--protein glycosyltransferase subunit DAD1.